Reading from the N-terminus, the 116-residue chain is Large ribosomal subunit protein bL19 (116 aa).

The protein belongs to the bacterial ribosomal protein bL19 family.

This protein is located at the 30S-50S ribosomal subunit interface and may play a role in the structure and function of the aminoacyl-tRNA binding site. The chain is Large ribosomal subunit protein bL19 from Chloroflexus aurantiacus (strain ATCC 29366 / DSM 635 / J-10-fl).